A 461-amino-acid polypeptide reads, in one-letter code: Thyroid hormone receptor beta (461 aa).

Positions 1–24 are disordered; the sequence is MTPNSMTENRLPAWDKQKPHPDRG. Residues 1-106 are modulating; sequence MTPNSMTENR…IPSYLDKDEL (106 aa). Basic and acidic residues predominate over residues 13 to 24; it reads AWDKQKPHPDRG. Residues C107, C110, C124, C127, C145, C151, C161, and C164 each contribute to the Zn(2+) site. NR C4-type zinc fingers lie at residues 107–127 and 145–169; these read CVVC…CEGC and CKYE…FKKC. Residues 107–181 constitute a DNA-binding region (nuclear receptor); sequence CVVCGDKATG…VGMATDLVLD (75 aa). The 245-residue stretch at 217-461 folds into the NR LBD domain; sequence EEWELIKTVT…PPLFLEVFED (245 aa). Residues 244 to 461 are interaction with NR2F6; that stretch reads KFLPEDIGQA…PPLFLEVFED (218 aa). 3 residues coordinate 3,3',5-triiodo-L-thyronine: R282, N331, and H435. R282, N331, and H435 together coordinate L-thyroxine.

It belongs to the nuclear hormone receptor family. NR1 subfamily. As to quaternary structure, binds DNA as a dimer; homodimer and heterodimer with RXRA. Interacts with the coactivators NCOA1/SRC1, NCOA2/GRIP1, NCOA7 and MED1/TRAP220 in a ligand-inducible manner. Interacts with the corepressor NCOR1 in absence of ligand. Interacts with C1D. Interacts with NR2F6; the interaction impairs the binding of the THRB homodimer and THRB:RXRB heterodimer to T3 response elements. Interacts with PRMT2 and THRSP. Interacts with TACC1; this interaction is decreased in the presence of thyroid hormone T3.

Its subcellular location is the nucleus. Nuclear hormone receptor that can act as a repressor or activator of transcription. High affinity receptor for thyroid hormones, including triiodothyronine and thyroxine. In Rattus norvegicus (Rat), this protein is Thyroid hormone receptor beta (Thrb).